A 74-amino-acid chain; its full sequence is UPF0741 protein BcerKBAB4_5177 (74 aa).

It belongs to the UPF0741 family.

This is UPF0741 protein BcerKBAB4_5177 from Bacillus mycoides (strain KBAB4) (Bacillus weihenstephanensis).